Consider the following 55-residue polypeptide: Large ribosomal subunit protein bL33 (55 aa).

Belongs to the bacterial ribosomal protein bL33 family.

The chain is Large ribosomal subunit protein bL33 from Rhodopseudomonas palustris (strain BisB18).